The sequence spans 321 residues: Zinc finger protein 524 (321 aa).

Composition is skewed to polar residues over residues M1–S14 and A39–S48. Disordered regions lie at residues M1–L80 and V86–K105. The a.T hook DNA-binding region spans S49–R59. 4 consecutive C2H2-type zinc fingers follow at residues H109–H131, H137–H159, F165–H187, and Y193–H216. The disordered stretch occupies residues G248–D321. Polar residues predominate over residues P262–S271. Residues T274 to Q285 show a composition bias toward gly residues.

The protein belongs to the krueppel C2H2-type zinc-finger protein family.

It localises to the nucleus. In terms of biological role, may be involved in transcriptional regulation. This chain is Zinc finger protein 524 (Znf524), found in Mus musculus (Mouse).